Reading from the N-terminus, the 179-residue chain is Ribosome maturation factor RimP (179 aa).

This sequence belongs to the RimP family.

The protein resides in the cytoplasm. Its function is as follows. Required for maturation of 30S ribosomal subunits. This chain is Ribosome maturation factor RimP, found in Chlorobium chlorochromatii (strain CaD3).